Here is a 308-residue protein sequence, read N- to C-terminus: GMP synthase [glutamine-hydrolyzing] subunit B (308 aa).

Positions 1–185 constitute a GMPS ATP-PPase domain; the sequence is MNWEKFVEEK…LGLPEKIYNR (185 aa). 28 to 34 provides a ligand contact to ATP; sequence SGGVDSS.

As to quaternary structure, heterodimer composed of a glutamine amidotransferase subunit (A) and a GMP-binding subunit (B).

The catalysed reaction is XMP + L-glutamine + ATP + H2O = GMP + L-glutamate + AMP + diphosphate + 2 H(+). It participates in purine metabolism; GMP biosynthesis; GMP from XMP (L-Gln route): step 1/1. Functionally, catalyzes the synthesis of GMP from XMP. The polypeptide is GMP synthase [glutamine-hydrolyzing] subunit B (guaAB) (Pyrococcus abyssi (strain GE5 / Orsay)).